Here is a 428-residue protein sequence, read N- to C-terminus: uncharacterized protein (428 aa).

Residues 1–49 (MRTQTFPPSSSSSRTTHPKKNRHSSNSSSMALVTPAKSSTGAAPKQSSQ) are disordered. Over residues 24–49 (SSNSSSMALVTPAKSSTGAAPKQSSQ) the composition is skewed to polar residues.

This is an uncharacterized protein from Caenorhabditis elegans.